The chain runs to 431 residues: Phosphate regulon sensor protein PhoR (431 aa).

Over 1–9 (MLERLSWKR) the chain is Cytoplasmic. Residues 10 to 28 (LVLELLLCCLPAFILGAFF) traverse the membrane as a helical segment. Over 29-32 (GYLP) the chain is Periplasmic. A helical transmembrane segment spans residues 33–51 (WFLLASVTGLLIWHFWNLL). Topologically, residues 52-431 (RLSWWLWVDR…PERLIAKNSD (380 aa)) are cytoplasmic. Residues 96–172 (LIKRFRSGAE…RPLNLVLNTG (77 aa)) enclose the PAS domain. Residues 210-425 (NVSHELRTPL…RFSFVIPERL (216 aa)) form the Histidine kinase domain. The residue at position 213 (His213) is a Phosphohistidine; by autocatalysis.

It is found in the cell inner membrane. It catalyses the reaction ATP + protein L-histidine = ADP + protein N-phospho-L-histidine.. Member of the two-component regulatory system PhoR/PhoB involved in the phosphate regulon genes expression. PhoR may function as a membrane-associated protein kinase that phosphorylates PhoB in response to environmental signals. The chain is Phosphate regulon sensor protein PhoR (phoR) from Escherichia coli (strain K12).